The chain runs to 344 residues: RNA-binding protein squid (344 aa).

Residues 1 to 55 (MAENKQVDTEINGEDFTKDVTADGPGSENGDAGAAGSTNGSSDNQSAASGQRDDD) are disordered. The segment covering 36–49 (GSTNGSSDNQSAAS) has biased composition (polar residues). RRM domains follow at residues 56–138 (RKLF…HGKI) and 136–213 (GKIF…RATP). Phosphoserine is present on Ser-148. Disordered regions lie at residues 214-238 (KPEN…RGGY) and 301-344 (GGGG…HQPY). An M9-like motif region spans residues 215–254 (PENQMMGGMRGGPRGGMRGGRGGYGGRGGYNNQWDGQGSY). Gly residues-rich tracts occupy residues 222–238 (GMRG…RGGY) and 301–337 (GGGG…GGGR). The segment at 300 to 338 (GGGGGGNMGGGRGGPRGGGGPKGGGGFNGGKQRGGGGRQ) is M9 motif.

In terms of assembly, interacts with bru1/Bruno; the interaction is direct but weak, and may play a role in regulation of grk mRNA localization and translation. Interacts (probably via M9 and M9-like motifs) with Tnpo/Transportin; the interaction is direct and is involved in nuclear localization. Interacts with fs(1)K10 (via N-terminus); may be involved in localization of sqd in the oocyte during oogenesis. As to quaternary structure, interacts (via C-terminus) with Hrb27C; the interaction is RNA dependent. Does not interact with Tnpo/Transportin. Interacts with fs(1)K10 (via N-terminus); may be involved in localization of sqd in the oocyte during oogenesis. In terms of assembly, interacts (probably via M9-like motif) with Tnpo/Transportin; the interaction is direct and is involved in nuclear localization. Interacts with fs(1)K10 (via N-terminus); may be involved in localization of sqd in the oocyte during oogenesis.

It localises to the nucleus. The protein resides in the cytoplasm. Its function is as follows. Component of ribonucleosomes. Could be needed to organize a concentration gradient of a dorsalizing morphogen (Dm) originating in the germinal vesicle. At least one of the isoforms is essential in somatic tissues. Interacts with grk mRNA (via 3' UTR) and involved in its localization to the dorsal anterior region of the oocyte during dorsal-ventral axis determination; may function as a ribonuclear protein complex together with otu and Hrb27C. Required for polytene chromosome dispersal in nurse cells during oogenesis; nuclear isoforms play a greater role in this than cytoplasmic isoforms. In terms of biological role, required nonredundantly with isoform A/sqdA for dorsoventral pattern determination during oogenesis. May be important in somatic tissues. Functionally, required nonredundantly with isoform B/SqdS for dorsoventral pattern determination during oogenesis. May lack a role in dorsoventral pattern determination during oogenesis. May be important in somatic tissues. This Drosophila melanogaster (Fruit fly) protein is RNA-binding protein squid.